A 240-amino-acid polypeptide reads, in one-letter code: ATP synthase subunit a (240 aa).

5 helical membrane-spanning segments follow: residues 21-41 (LSSM…AMLF), 83-103 (AVTL…FAII), 116-136 (DPTV…FYGV), 184-204 (LLGL…GAAI), and 207-227 (LIWQ…FVML).

Belongs to the ATPase A chain family. As to quaternary structure, F-type ATPases have 2 components, CF(1) - the catalytic core - and CF(0) - the membrane proton channel. CF(1) has five subunits: alpha(3), beta(3), gamma(1), delta(1), epsilon(1). CF(0) has three main subunits: a(1), b(2) and c(9-12). The alpha and beta chains form an alternating ring which encloses part of the gamma chain. CF(1) is attached to CF(0) by a central stalk formed by the gamma and epsilon chains, while a peripheral stalk is formed by the delta and b chains.

Its subcellular location is the cell membrane. Key component of the proton channel; it plays a direct role in the translocation of protons across the membrane. The protein is ATP synthase subunit a of Macrococcus caseolyticus (strain JCSC5402) (Macrococcoides caseolyticum).